A 360-amino-acid polypeptide reads, in one-letter code: 1-deoxy-D-xylulose 5-phosphate reductoisomerase (360 aa).

NADPH-binding residues include S7, G8, S9, I10, and N115. K116 provides a ligand contact to 1-deoxy-D-xylulose 5-phosphate. An NADPH-binding site is contributed by E117. A Mn(2+)-binding site is contributed by D135. 4 residues coordinate 1-deoxy-D-xylulose 5-phosphate: S136, E137, S159, and H182. E137 provides a ligand contact to Mn(2+). Residue G188 participates in NADPH binding. The 1-deoxy-D-xylulose 5-phosphate site is built by S195, N200, K201, and E204. Position 204 (E204) interacts with Mn(2+).

This sequence belongs to the DXR family. Mg(2+) serves as cofactor. Requires Mn(2+) as cofactor.

It carries out the reaction 2-C-methyl-D-erythritol 4-phosphate + NADP(+) = 1-deoxy-D-xylulose 5-phosphate + NADPH + H(+). Its pathway is isoprenoid biosynthesis; isopentenyl diphosphate biosynthesis via DXP pathway; isopentenyl diphosphate from 1-deoxy-D-xylulose 5-phosphate: step 1/6. In terms of biological role, catalyzes the NADPH-dependent rearrangement and reduction of 1-deoxy-D-xylulose-5-phosphate (DXP) to 2-C-methyl-D-erythritol 4-phosphate (MEP). The chain is 1-deoxy-D-xylulose 5-phosphate reductoisomerase from Campylobacter fetus subsp. fetus (strain 82-40).